We begin with the raw amino-acid sequence, 93 residues long: uncharacterized protein (93 aa).

It to E.coli YeaC.

This is an uncharacterized protein from Pseudoalteromonas haloplanktis (Alteromonas haloplanktis).